Consider the following 375-residue polypeptide: Platelet-derived growth factor receptor-like protein (375 aa).

An N-terminal signal peptide occupies residues 1–21 (MKVWLLLGLLLVHEALEDVTG). Residues 22–64 (QHLPKNKRPKEPGENRIKPTNKKVKPKIPKIKDRDSADSTPKT) form a disordered region. Residues 40–50 (PTNKKVKPKIP) are compositionally biased toward basic residues. The Ig-like C2-type 1 domain maps to 62–159 (PKTQSIMMQV…GYICRKDETK (98 aa)). A disulfide bridge connects residues Cys96 and Cys143. N-linked (GlcNAc...) asparagine glycans are attached at residues Asn132 and Asn219. The region spanning 272–375 (PSTTILASSN…TTVATTVEFS (104 aa)) is the Ig-like C2-type 2 domain. Cys293 and Cys357 are oxidised to a cystine.

As to quaternary structure, forms a complex composed of PDGFRL, TNK2 and GRB2.

It is found in the secreted. In Macaca fascicularis (Crab-eating macaque), this protein is Platelet-derived growth factor receptor-like protein (PDGFRL).